Reading from the N-terminus, the 178-residue chain is uncharacterized protein (178 aa).

An N-terminal signal peptide occupies residues 1–20; it reads MKKLLVASLALLILTPVALA.

This is an uncharacterized protein from Archaeoglobus fulgidus (strain ATCC 49558 / DSM 4304 / JCM 9628 / NBRC 100126 / VC-16).